A 332-amino-acid chain; its full sequence is Cell division protein ZipA (332 aa).

Over 1-6 the chain is Periplasmic; the sequence is MMQDLR. A helical transmembrane segment spans residues 7–27; sequence LILIVVGAIAIIALLLHGLWT. The Cytoplasmic portion of the chain corresponds to 28-332; sequence SRKERSSLFR…RIRDVLKANA (305 aa). The span at 40–51 shows a compositional bias: basic and acidic residues; it reads PVKRAKKARDET. Residues 40–189 are disordered; the sequence is PVKRAKKARD…VQPAPQQPAE (150 aa). Low complexity predominate over residues 76-88; sequence SFDSASVDSSSFD. Residues 93 to 105 show a composition bias toward basic and acidic residues; it reads AREDVRSEAKSPF.

This sequence belongs to the ZipA family. Interacts with FtsZ via their C-terminal domains.

It localises to the cell inner membrane. In terms of biological role, essential cell division protein that stabilizes the FtsZ protofilaments by cross-linking them and that serves as a cytoplasmic membrane anchor for the Z ring. Also required for the recruitment to the septal ring of downstream cell division proteins. The protein is Cell division protein ZipA of Pectobacterium atrosepticum (strain SCRI 1043 / ATCC BAA-672) (Erwinia carotovora subsp. atroseptica).